The chain runs to 211 residues: Uracil phosphoribosyltransferase (211 aa).

5-phospho-alpha-D-ribose 1-diphosphate contacts are provided by residues Arg-81, Arg-106, and 133-141; that span reads DPMLATGNS. Uracil contacts are provided by residues Ile-196 and 201–203; that span reads GDA. Asp-202 is a 5-phospho-alpha-D-ribose 1-diphosphate binding site.

It belongs to the UPRTase family. Requires Mg(2+) as cofactor.

The enzyme catalyses UMP + diphosphate = 5-phospho-alpha-D-ribose 1-diphosphate + uracil. It participates in pyrimidine metabolism; UMP biosynthesis via salvage pathway; UMP from uracil: step 1/1. With respect to regulation, allosterically activated by GTP. Functionally, catalyzes the conversion of uracil and 5-phospho-alpha-D-ribose 1-diphosphate (PRPP) to UMP and diphosphate. This Myxococcus xanthus (strain DK1622) protein is Uracil phosphoribosyltransferase.